Here is a 39-residue protein sequence, read N- to C-terminus: Photosystem II reaction center protein I (39 aa).

Residues 6 to 26 (ISVYSVVFFFIGIFMFGFLAS) form a helical membrane-spanning segment.

Belongs to the PsbI family. As to quaternary structure, PSII is composed of 1 copy each of membrane proteins PsbA, PsbB, PsbC, PsbD, PsbE, PsbF, PsbH, PsbI, PsbJ, PsbK, PsbL, PsbM, PsbT, PsbX, PsbY, PsbZ, Psb30/Ycf12, peripheral proteins PsbO, CyanoQ (PsbQ), PsbU, PsbV and a large number of cofactors. It forms dimeric complexes.

The protein localises to the cellular thylakoid membrane. Its function is as follows. One of the components of the core complex of photosystem II (PSII), required for its stability and/or assembly. PSII is a light-driven water:plastoquinone oxidoreductase that uses light energy to abstract electrons from H(2)O, generating O(2) and a proton gradient subsequently used for ATP formation. It consists of a core antenna complex that captures photons, and an electron transfer chain that converts photonic excitation into a charge separation. This is Photosystem II reaction center protein I from Synechococcus sp. (strain RCC307).